The primary structure comprises 262 residues: WUSCHEL-related homeobox 11 (262 aa).

The span at 1–11 (MDGGHSPDRHA) shows a compositional bias: basic and acidic residues. Disordered stretches follow at residues 1-21 (MDGGHSPDRHAAAAAGEPVRS) and 79-115 (RRRQRQLQAQAQAAAAAASSGSPPTASSGGLAPGHAG). Residues 18 to 82 (PVRSRWTPKP…NRRSRSRRRQ (65 aa)) constitute a DNA-binding region (homeobox). Low complexity predominate over residues 84-112 (QLQAQAQAAAAAASSGSPPTASSGGLAPG).

Belongs to the WUS homeobox family. Interacts with ERF3.

It is found in the nucleus. In terms of biological role, transcription factor which may be involved in developmental processes. Promotes the development of crown roots (both initiation and elongation), main components of the fibrous root system, by regulating the expression of genes required for crown root development and hormone-responsive genes involved in cytokinin (e.g. RR1, RR2, RR3 and RR4) and auxin (e.g. IAA5, IAA11, IAA23 and IAA31) signaling. This is WUSCHEL-related homeobox 11 from Oryza sativa subsp. indica (Rice).